The chain runs to 607 residues: Guanine nucleotide-binding protein-like 1 (607 aa).

Over residues Met-1–Lys-14 the composition is skewed to basic residues. The interval Met-1–Tyr-81 is disordered. Residues Gln-15 to Leu-26 are compositionally biased toward basic and acidic residues. Phosphoserine is present on residues Ser-32, Ser-33, and Ser-34. Phosphothreonine is present on residues Thr-48 and Thr-50. 2 positions are modified to phosphoserine: Ser-51 and Ser-68. Residues Trp-178–Pro-418 enclose the CP-type G domain. A GTP-binding site is contributed by Asn-225–Asp-228. Ser-324 carries the post-translational modification Phosphoserine. GTP is bound by residues Gly-367–Ser-374 and Asp-411–Leu-415. The disordered stretch occupies residues Gly-547–Cys-607. The segment covering Gly-550–Thr-584 has biased composition (acidic residues). Phosphoserine is present on residues Ser-561, Ser-562, and Ser-563.

Belongs to the TRAFAC class YlqF/YawG GTPase family.

Possible regulatory or functional link with the histocompatibility cluster. The polypeptide is Guanine nucleotide-binding protein-like 1 (GNL1) (Macaca fascicularis (Crab-eating macaque)).